A 347-amino-acid polypeptide reads, in one-letter code: Dihydroorotate dehydrogenase (quinone) (347 aa).

FMN-binding positions include 62–66 (AGLDK) and Thr86. Lys66 is a binding site for substrate. 111-115 (NRMGF) contacts substrate. FMN-binding residues include Asn142 and Asn175. Substrate is bound at residue Asn175. The active-site Nucleophile is the Ser178. Position 180 (Asn180) interacts with substrate. FMN-binding residues include Lys220 and Thr248. 249–250 (NT) serves as a coordination point for substrate. FMN-binding positions include Gly271, Gly300, and 321–322 (YS).

Belongs to the dihydroorotate dehydrogenase family. Type 2 subfamily. Monomer. FMN serves as cofactor.

The protein localises to the cell membrane. It catalyses the reaction (S)-dihydroorotate + a quinone = orotate + a quinol. It functions in the pathway pyrimidine metabolism; UMP biosynthesis via de novo pathway; orotate from (S)-dihydroorotate (quinone route): step 1/1. In terms of biological role, catalyzes the conversion of dihydroorotate to orotate with quinone as electron acceptor. The chain is Dihydroorotate dehydrogenase (quinone) from Dechloromonas aromatica (strain RCB).